We begin with the raw amino-acid sequence, 71 residues long: Small ribosomal subunit protein bS21 (71 aa).

Belongs to the bacterial ribosomal protein bS21 family.

The protein is Small ribosomal subunit protein bS21 of Hahella chejuensis (strain KCTC 2396).